A 489-amino-acid chain; its full sequence is Glutamyl-tRNA(Gln) amidotransferase subunit A (489 aa).

Residues Lys-80 and Ser-160 each act as charge relay system in the active site. The Acyl-ester intermediate role is filled by Ser-184.

It belongs to the amidase family. GatA subfamily. As to quaternary structure, heterotrimer of A, B and C subunits.

The catalysed reaction is L-glutamyl-tRNA(Gln) + L-glutamine + ATP + H2O = L-glutaminyl-tRNA(Gln) + L-glutamate + ADP + phosphate + H(+). Allows the formation of correctly charged Gln-tRNA(Gln) through the transamidation of misacylated Glu-tRNA(Gln) in organisms which lack glutaminyl-tRNA synthetase. The reaction takes place in the presence of glutamine and ATP through an activated gamma-phospho-Glu-tRNA(Gln). In Wolbachia sp. subsp. Drosophila simulans (strain wRi), this protein is Glutamyl-tRNA(Gln) amidotransferase subunit A.